A 433-amino-acid polypeptide reads, in one-letter code: Enolase (433 aa).

A disordered region spans residues 37 to 59; the sequence is RAAVPSGASTGEHEAVELRDGDK. Positions 47–59 are enriched in basic and acidic residues; sequence GEHEAVELRDGDK. Gln166 lines the (2R)-2-phosphoglycerate pocket. Residue Glu208 is the Proton donor of the active site. The Mg(2+) site is built by Asp245, Glu291, and Asp318. (2R)-2-phosphoglycerate is bound by residues Lys343, Arg372, Ser373, and Lys394. Lys343 (proton acceptor) is an active-site residue.

The protein belongs to the enolase family. Mg(2+) is required as a cofactor.

The protein resides in the cytoplasm. It localises to the secreted. It is found in the cell surface. The catalysed reaction is (2R)-2-phosphoglycerate = phosphoenolpyruvate + H2O. It participates in carbohydrate degradation; glycolysis; pyruvate from D-glyceraldehyde 3-phosphate: step 4/5. In terms of biological role, catalyzes the reversible conversion of 2-phosphoglycerate (2-PG) into phosphoenolpyruvate (PEP). It is essential for the degradation of carbohydrates via glycolysis. The protein is Enolase of Leptospira biflexa serovar Patoc (strain Patoc 1 / Ames).